The following is a 332-amino-acid chain: Tyrosine--tRNA ligase (332 aa).

Positions 32, 156, 160, 163, and 178 each coordinate L-tyrosine. The short motif at 219–223 is the 'KMSKS' region element; it reads KMSKS. Residue lysine 222 participates in ATP binding.

This sequence belongs to the class-I aminoacyl-tRNA synthetase family. TyrS type 4 subfamily. Homodimer.

It is found in the cytoplasm. The enzyme catalyses tRNA(Tyr) + L-tyrosine + ATP = L-tyrosyl-tRNA(Tyr) + AMP + diphosphate + H(+). Catalyzes the attachment of tyrosine to tRNA(Tyr) in a two-step reaction: tyrosine is first activated by ATP to form Tyr-AMP and then transferred to the acceptor end of tRNA(Tyr). This Thermoplasma acidophilum (strain ATCC 25905 / DSM 1728 / JCM 9062 / NBRC 15155 / AMRC-C165) protein is Tyrosine--tRNA ligase.